The chain runs to 478 residues: Glycogen synthase (478 aa).

Lysine 15 is an ADP-alpha-D-glucose binding site.

This sequence belongs to the glycosyltransferase 1 family. Bacterial/plant glycogen synthase subfamily.

The catalysed reaction is [(1-&gt;4)-alpha-D-glucosyl](n) + ADP-alpha-D-glucose = [(1-&gt;4)-alpha-D-glucosyl](n+1) + ADP + H(+). Its pathway is glycan biosynthesis; glycogen biosynthesis. In terms of biological role, synthesizes alpha-1,4-glucan chains using ADP-glucose. The protein is Glycogen synthase of Bacillus cytotoxicus (strain DSM 22905 / CIP 110041 / 391-98 / NVH 391-98).